A 242-amino-acid chain; its full sequence is ATP synthase subunit 4, mitochondrial (242 aa).

The transit peptide at 1–35 (MSFRALTMRSAVARTALNNTIRSARVATPYLGIRH) directs the protein to the mitochondrion.

Belongs to the eukaryotic ATPase B chain family. As to quaternary structure, F-type ATPases have 2 components, CF(1) - the catalytic core - and CF(0) - the membrane proton channel. In yeast, the dimeric form of ATP synthase consists of 17 polypeptides: alpha, beta, gamma, delta, epsilon, 4 (B), 5 (OSCP), 6 (A), 8, 9 (C), d, E (Tim11), f, g, h, i/j and k.

The protein localises to the mitochondrion. The protein resides in the mitochondrion inner membrane. In terms of biological role, mitochondrial membrane ATP synthase (F(1)F(0) ATP synthase or Complex V) produces ATP from ADP in the presence of a proton gradient across the membrane which is generated by electron transport complexes of the respiratory chain. F-type ATPases consist of two structural domains, F(1) - containing the extramembraneous catalytic core, and F(0) - containing the membrane proton channel, linked together by a central stalk and a peripheral stalk. During catalysis, ATP synthesis in the catalytic domain of F(1) is coupled via a rotary mechanism of the central stalk subunits to proton translocation. Part of the complex F(0) domain and the peripheric stalk, which acts as a stator to hold the catalytic alpha(3)beta(3) subcomplex and subunit a/ATP6 static relative to the rotary elements. The polypeptide is ATP synthase subunit 4, mitochondrial (ATP4) (Candida glabrata (strain ATCC 2001 / BCRC 20586 / JCM 3761 / NBRC 0622 / NRRL Y-65 / CBS 138) (Yeast)).